The primary structure comprises 374 residues: Heptahelical transmembrane protein 5 (374 aa).

The Cytoplasmic segment spans residues 1–79 (MGDEAEIKEH…LSIFTIHNET (79 aa)). A helical membrane pass occupies residues 80-100 (LNVWTHLIGFFLFLALTIYTA). Residues 101 to 191 (TKVPSVVDLH…LIFRPITRWP (91 aa)) lie on the Extracellular side of the membrane. The chain crosses the membrane as a helical span at residues 192–212 (FYAFLGGAIFCLLASSTCHLL). Residues 213–228 (SCHSERVSYIMLRLDY) are Cytoplasmic-facing. Residues 229 to 249 (AGIAALIATSFYPPVYYSFMC) form a helical membrane-spanning segment. Residues 250–256 (DPFFCNL) are Extracellular-facing. Residues 257–277 (YLGFITILGIATVLVSLLPVF) traverse the membrane as a helical segment. The Cytoplasmic portion of the chain corresponds to 278–288 (QSLEFRVVRAS). The chain crosses the membrane as a helical span at residues 289 to 309 (LFFGMGFSGLAPILHKLIIFW). Over 310-313 (DQPE) the chain is Extracellular. The chain crosses the membrane as a helical span at residues 314–334 (ALHMTGYEILMGLLYGLGAVV). At 335–347 (YATRIPERWMPGK) the chain is on the cytoplasmic side. The helical transmembrane segment at 348 to 368 (FDIAGHSHQLFHVLVVAGALT) threads the bilayer. At 369–374 (HYRAGL) the chain is on the extracellular side.

The protein belongs to the ADIPOR family. Expressed in roots, leaves, stems and flowers.

The protein resides in the membrane. Its function is as follows. May play a role in abiotic stress response. The protein is Heptahelical transmembrane protein 5 (HHP5) of Arabidopsis thaliana (Mouse-ear cress).